The chain runs to 1128 residues: Nck-associated protein 1 (1128 aa).

The interval 640 to 665 is disordered; sequence AVNKKSKKQTGKKGEPEREKPGVESM. A compositionally biased stretch (basic and acidic residues) spans 651-665; it reads KKGEPEREKPGVESM. Residues 995-1015 form a helical membrane-spanning segment; the sequence is IACLLMVFVAVSLPTLASNVM.

This sequence belongs to the HEM-1/HEM-2 family.

It localises to the cell membrane. Its subcellular location is the cell projection. The protein localises to the lamellipodium membrane. Functionally, part of the WAVE complex that regulates lamellipodia formation. The WAVE complex regulates actin filament reorganization via its interaction with the Arp2/3 complex. Actin remodeling activity is regulated by RAC1. Plays a role in neural tube closure. The polypeptide is Nck-associated protein 1 (nckap1) (Xenopus laevis (African clawed frog)).